Here is a 512-residue protein sequence, read N- to C-terminus: 2,3-bisphosphoglycerate-independent phosphoglycerate mutase (512 aa).

Positions 14 and 64 each coordinate Mn(2+). Ser64 functions as the Phosphoserine intermediate in the catalytic mechanism. Substrate is bound by residues His125, 155–156 (RD), Arg187, Arg193, 259–262 (RADR), and Lys332. The Mn(2+) site is built by Asp399, His403, Asp440, His441, and His459.

Belongs to the BPG-independent phosphoglycerate mutase family. In terms of assembly, monomer. The cofactor is Mn(2+).

The enzyme catalyses (2R)-2-phosphoglycerate = (2R)-3-phosphoglycerate. It participates in carbohydrate degradation; glycolysis; pyruvate from D-glyceraldehyde 3-phosphate: step 3/5. Catalyzes the interconversion of 2-phosphoglycerate and 3-phosphoglycerate. In Vesicomyosocius okutanii subsp. Calyptogena okutanii (strain HA), this protein is 2,3-bisphosphoglycerate-independent phosphoglycerate mutase.